The chain runs to 406 residues: Putative cyclin-F3-2 (406 aa).

A disordered region spans residues 1–107; the sequence is MARPRTRSVA…PGAAGGPWQL (107 aa). Composition is skewed to low complexity over residues 11-21 and 29-57; these read RMEATAAAAAA and NPDGAEGAAVVAVAPEAAAEGPNEPNAGE.

It belongs to the cyclin family. Cyclin F subfamily.

This Oryza sativa subsp. japonica (Rice) protein is Putative cyclin-F3-2 (CYCF3-2).